Consider the following 707-residue polypeptide: Protein kinase C theta type (707 aa).

The 107-residue stretch at Met1–Leu107 folds into the C2 domain. Tyr90 carries the phosphotyrosine; by LCK modification. Residues Cys159–Cys209 form a Phorbol-ester/DAG-type 1 zinc finger. Thr219 carries the post-translational modification Phosphothreonine; by autocatalysis. The Phorbol-ester/DAG-type 2 zinc finger occupies Pro231–Cys281. Residue Ser348 is modified to Phosphoserine. The region spanning Phe380–Phe634 is the Protein kinase domain. ATP contacts are provided by residues Leu386–Val394 and Lys409. The Proton acceptor role is filled by Asp504. Thr538 is modified (phosphothreonine; by PDPK1). One can recognise an AGC-kinase C-terminal domain in the interval Arg635–Cys706. Residues Ser676 and Ser685 each carry the phosphoserine modification. A Phosphoserine; by autocatalysis modification is found at Ser695.

This sequence belongs to the protein kinase superfamily. AGC Ser/Thr protein kinase family. PKC subfamily. As to quaternary structure, part of a membrane raft complex composed at least of BCL10, CARD11, MALT1 and IKBKB. Interacts with GLRX3 (via N-terminus). Interacts with ECT2. Interacts with CCDC88A/GIV; the interaction leads to phosphorylation of CCDC88A and inhibition of its guanine nucleotide exchange factor activity. Interacts with CD28. Mg(2+) serves as cofactor. Autophosphorylation at Thr-219 is required for targeting to the TCR and cellular function of PRKCQ upon antigen receptor ligation. Following TCR stimulation, phosphorylated at Tyr-90 and Ser-685.

It localises to the cytoplasm. The protein localises to the cell membrane. The enzyme catalyses L-seryl-[protein] + ATP = O-phospho-L-seryl-[protein] + ADP + H(+). It catalyses the reaction L-threonyl-[protein] + ATP = O-phospho-L-threonyl-[protein] + ADP + H(+). Its activity is regulated as follows. Novel PKCs (PRKCD, PRKCE, PRKCH and PRKCQ) are calcium-insensitive, but activated by diacylglycerol (DAG) and phosphatidylserine. Three specific sites; Thr-538 (activation loop of the kinase domain), Ser-676 (turn motif) and Ser-695 (hydrophobic region), need to be phosphorylated for its full activation. Its function is as follows. Calcium-independent, phospholipid- and diacylglycerol (DAG)-dependent serine/threonine-protein kinase that mediates non-redundant functions in T-cell receptor (TCR) signaling, including T-cells activation, proliferation, differentiation and survival, by mediating activation of multiple transcription factors such as NF-kappa-B, JUN, NFATC1 and NFATC2. In TCR-CD3/CD28-co-stimulated T-cells, is required for the activation of NF-kappa-B and JUN, which in turn are essential for IL2 production, and participates in the calcium-dependent NFATC1 and NFATC2 transactivation. Mediates the activation of the canonical NF-kappa-B pathway (NFKB1) by direct phosphorylation of CARD11 on several serine residues, inducing CARD11 association with lipid rafts and recruitment of the BCL10-MALT1 complex, which then activates IKK complex, resulting in nuclear translocation and activation of NFKB1. May also play an indirect role in activation of the non-canonical NF-kappa-B (NFKB2) pathway. In the signaling pathway leading to JUN activation, acts by phosphorylating the mediator STK39/SPAK and may not act through MAP kinases signaling. Plays a critical role in TCR/CD28-induced NFATC1 and NFATC2 transactivation by participating in the regulation of reduced inositol 1,4,5-trisphosphate generation and intracellular calcium mobilization. After costimulation of T-cells through CD28 can phosphorylate CBLB and is required for the ubiquitination and subsequent degradation of CBLB, which is a prerequisite for the activation of TCR. During T-cells differentiation, plays an important role in the development of T-helper 2 (Th2) cells following immune and inflammatory responses, and, in the development of inflammatory autoimmune diseases, is necessary for the activation of IL17-producing Th17 cells. May play a minor role in Th1 response. Upon TCR stimulation, mediates T-cell protective survival signal by phosphorylating BAD, thus protecting T-cells from BAD-induced apoptosis, and by up-regulating BCL-X(L)/BCL2L1 levels through NF-kappa-B and JUN pathways. In platelets, regulates signal transduction downstream of the ITGA2B, CD36/GP4, F2R/PAR1 and F2RL3/PAR4 receptors, playing a positive role in 'outside-in' signaling and granule secretion signal transduction. May relay signals from the activated ITGA2B receptor by regulating the uncoupling of WASP and WIPF1, thereby permitting the regulation of actin filament nucleation and branching activity of the Arp2/3 complex. May mediate inhibitory effects of free fatty acids on insulin signaling by phosphorylating IRS1, which in turn blocks IRS1 tyrosine phosphorylation and downstream activation of the PI3K/AKT pathway. Phosphorylates MSN (moesin) in the presence of phosphatidylglycerol or phosphatidylinositol. Phosphorylates PDPK1 at 'Ser-504' and 'Ser-532' and negatively regulates its ability to phosphorylate PKB/AKT1. Phosphorylates CCDC88A/GIV and inhibits its guanine nucleotide exchange factor activity. Phosphorylates and activates LRRK1, which phosphorylates RAB proteins involved in intracellular trafficking. The polypeptide is Protein kinase C theta type (Prkcq) (Rattus norvegicus (Rat)).